The chain runs to 206 residues: 3-demethoxyubiquinol 3-hydroxylase (206 aa).

The Fe cation site is built by glutamate 55, glutamate 85, histidine 88, glutamate 137, glutamate 169, and histidine 172.

The protein belongs to the COQ7 family. Fe cation is required as a cofactor.

It localises to the cell membrane. The enzyme catalyses a 5-methoxy-2-methyl-3-(all-trans-polyprenyl)benzene-1,4-diol + AH2 + O2 = a 3-demethylubiquinol + A + H2O. It functions in the pathway cofactor biosynthesis; ubiquinone biosynthesis. Its function is as follows. Catalyzes the hydroxylation of 2-nonaprenyl-3-methyl-6-methoxy-1,4-benzoquinol during ubiquinone biosynthesis. The protein is 3-demethoxyubiquinol 3-hydroxylase of Chromobacterium violaceum (strain ATCC 12472 / DSM 30191 / JCM 1249 / CCUG 213 / NBRC 12614 / NCIMB 9131 / NCTC 9757 / MK).